A 284-amino-acid polypeptide reads, in one-letter code: Pseudopaline exporter CntI (284 aa).

10 helical membrane-spanning segments follow: residues 2–22 (VLDL…TFSV), 34–54 (LPAA…IYLL), 74–94 (GVMG…IPLA), 96–116 (ASIL…LFLG), 122–142 (AVYW…KPFS), 147–167 (SVYA…SVAI), 179–199 (IVFY…WSDF), 209–229 (GLLL…TRAF), 236–256 (IVAV…WLFW), and 259–279 (VPDA…IALS). 2 consecutive EamA domains span residues 8–138 (SGVL…LMIV) and 151–279 (VVGL…IALS).

It belongs to the EamA transporter family.

The protein resides in the cell inner membrane. Functionally, transports the metallophore pseudopaline, which is involved in the acquisition of nickel and zinc, and thus enables bacterial growth inside the host, where metal access is limited. Is probably involved in the export of pseudopaline. This chain is Pseudopaline exporter CntI, found in Pseudomonas aeruginosa (strain UCBPP-PA14).